We begin with the raw amino-acid sequence, 63 residues long: Small ribosomal subunit protein bS21 (63 aa).

This sequence belongs to the bacterial ribosomal protein bS21 family.

The sequence is that of Small ribosomal subunit protein bS21 from Syntrophus aciditrophicus (strain SB).